A 501-amino-acid polypeptide reads, in one-letter code: Pentatricopeptide repeat-containing protein At4g14190, chloroplastic (501 aa).

Residues 1-88 (MENLTTAQFL…SGSCPLRLLQ (88 aa)) constitute a chloroplast transit peptide. PPR repeat units follow at residues 130–160 (SENNYERIIRFLCEEKSMSEAIRAFRSMIDD), 166–200 (SLEIYNSIIHSYADDGKFEEAMFYLNHMKENGLLP), 201–235 (ITETYDGLIEAYGKWKMYDEIVLCLKRMESDGCVR), 236–270 (DHVTYNLLIREFSRGGLLKRMEQMYQSLMSRKMTL), and 271–305 (EPSTLLSMLEAYAEFGLIEKMEETCNKIIRFGISL).

The protein belongs to the PPR family. P subfamily.

The protein localises to the plastid. It localises to the chloroplast. This chain is Pentatricopeptide repeat-containing protein At4g14190, chloroplastic, found in Arabidopsis thaliana (Mouse-ear cress).